Reading from the N-terminus, the 299-residue chain is UDP-N-acetylenolpyruvoylglucosamine reductase (299 aa).

In terms of domain architecture, FAD-binding PCMH-type spans 19-192; sequence LGGQALAEVR…AAVTLQLRRS (174 aa). Arg169 is an active-site residue. Cys221 serves as the catalytic Proton donor. Glu292 is an active-site residue.

This sequence belongs to the MurB family. The cofactor is FAD.

The protein resides in the cytoplasm. The enzyme catalyses UDP-N-acetyl-alpha-D-muramate + NADP(+) = UDP-N-acetyl-3-O-(1-carboxyvinyl)-alpha-D-glucosamine + NADPH + H(+). It participates in cell wall biogenesis; peptidoglycan biosynthesis. Cell wall formation. The chain is UDP-N-acetylenolpyruvoylglucosamine reductase from Oleidesulfovibrio alaskensis (strain ATCC BAA-1058 / DSM 17464 / G20) (Desulfovibrio alaskensis).